The sequence spans 314 residues: uncharacterized protein (314 aa).

2 helical membrane-spanning segments follow: residues 23–43 (LALG…MALF) and 98–118 (MASG…GPLT). Positions 165-184 (GLGSGAGGGDVGGGGAGGTT) are enriched in gly residues. The disordered stretch occupies residues 165–314 (GLGSGAGGGD…APDEKTDAGE (150 aa)). Pro residues predominate over residues 190 to 202 (GPPPVPTSSPPTT). Low complexity-rich tracts occupy residues 203–212 (PAGAPTKSAT) and 219–232 (ASPA…AGMP). Residues 221–241 (PASAHMGAAGMPMVPPGAMGA) form a helical membrane-spanning segment. Over residues 294–314 (LLPEHKDFGRIAPDEKTDAGE) the composition is skewed to basic and acidic residues.

It is found in the cell membrane. This is an uncharacterized protein from Mycobacterium tuberculosis (strain ATCC 25618 / H37Rv).